A 1906-amino-acid polypeptide reads, in one-letter code: Myosin light chain kinase, smooth muscle (1906 aa).

2 Ig-like C2-type domains span residues 28 to 117 and 156 to 244; these read PAFT…VELT and PKFA…AELT. Disordered stretches follow at residues 127 to 157 and 309 to 453; these read SLPSSAKTPGGRLSVPPVEHRPSIWGESPPK and ETFY…SKVS. Residues 309–321 are compositionally biased toward basic and acidic residues; that stretch reads ETFYTSREAKDGK. Polar residues-rich tracts occupy residues 345 to 354 and 384 to 402; these read LQKTSSTITL and PLMTTTTQENPSLTGQVSP. A compositionally biased stretch (basic and acidic residues) spans 403-424; the sequence is RSRETENRAGVRKSVKEEKREP. Ig-like C2-type domains are found at residues 429–517, 521–613, 637–725, and 735–830; these read PQFE…WLLT, PKVE…AQVT, PIFL…ATLT, and PWFI…SSAS. The IIA-1 repeat unit spans residues 660 to 676; sequence VSANPCPEIIWLHNGKE. Residues 660–1833 are 4 X repeats, motif IIA; it reads VSANPCPEII…EVMWYKDDQP (1174 aa). The IIB-1 repeat unit spans residues 693-708; sequence SLYIQEVFPEDTGKYT. Residues 693 to 1866 are 5 X repeats, motif IIB; that stretch reads SLYIQEVFPE…VCGDDDAKYT (1174 aa). An IIA-2 repeat occupies 758 to 774; that stretch reads IAGDPFPTVHWFKDGQE. An IIB-2 repeat occupies 791–807; sequence TLILRNVQSRHAGQYEI. 2 disordered regions span residues 831-881 and 947-1086; these read RAEM…QEDV and PKTL…APSF. 2 stretches are compositionally biased toward basic and acidic residues: residues 833–850 and 867–881; these read EMLRDGRESASSGERRDG and SSSETRAAEEEQEDV. One copy of the III-1 repeat lies at 970 to 987; it reads AKKGTPKTPLPEKVPPPK. A 4 X repeats, motif III region spans residues 970-1226; that stretch reads AKKGTPKTPL…TPPKAATPPQ (257 aa). Over residues 977–988 the composition is skewed to pro residues; it reads TPLPEKVPPPKP. One copy of the III-2 repeat lies at 999–1016; that stretch reads AKKKPPAENGSASTPAPN. Over residues 1039–1051 the composition is skewed to basic and acidic residues; that stretch reads VKKEEKNDRKCEH. Residues 1061 to 1078 form an III-3 repeat; it reads IGKKAENKPAASKPTPPP. Ig-like C2-type domains follow at residues 1084-1172 and 1225-1313; these read PSFT…CKVL and PQIT…VNLT. One copy of the IIA-3 repeat lies at 1107–1123; the sequence is ISSDPPASVSWTLDSKA. One copy of the IIB-3 repeat lies at 1140–1156; sequence SLTIEKVMPEDGGEYKC. The disordered stretch occupies residues 1180 to 1227; the sequence is KAAKPAEKKTKKPKTTLPPVLSTESSEATVKKKPAPKTPPKAATPPQI. The stretch at 1209–1226 is one III-4 repeat; sequence VKKKPAPKTPPKAATPPQ. One copy of the IIB-4 repeat lies at 1281–1297; that stretch reads KLTISSTKQEHCGCYTL. Positions 1317 to 1364 are motif IA; that stretch reads KPDPPAGTPCASDIRSSSLTLSWYGSSYDGGSAVQSYTVEIWNSVDNK. Positions 1321 to 1414 constitute a Fibronectin type-III domain; it reads PAGTPCASDI…ESEVVKVGEK (94 aa). A motif IB region spans residues 1385–1402; it reads REYKFRVRAANVYGISEP. Residues 1414–1433 are disordered; that stretch reads KQEEELKEEEAELSDDEGKE. Residues 1415-1432 are compositionally biased toward acidic residues; it reads QEEELKEEEAELSDDEGK. The Protein kinase domain occupies 1453–1708; the sequence is YNIEERLGSG…CTQCLQHPWL (256 aa). ATP-binding positions include 1459 to 1467 and lysine 1482; that span reads LGSGKFGQV. The Proton acceptor role is filled by aspartate 1574. Residues 1700–1763 are calmodulin-binding; the sequence is TQCLQHPWLQ…SGMSGRKASG (64 aa). The interval 1716 to 1728 is calmodulin autoinhibition (AM13) region; sequence EAKKLSKDRMKKY. The calmodulin recognition (RS20) region stretch occupies residues 1730–1749; it reads ARRKWQKTGHAVRAIGRLSS. Serine 1762 is subject to Phosphoserine; by PKG. Serine 1768 carries the phosphoserine; by MAPK modification. One can recognise an Ig-like C2-type 9 domain in the interval 1794–1885; sequence PYFTKTILDM…ATCTAELLVE (92 aa). The IIA-4 repeat unit spans residues 1817 to 1833; it reads IEGYPDPEVMWYKDDQP. Residues 1851–1866 form an IIB-5 repeat; the sequence is SLTISEVCGDDDAKYT. The tract at residues 1885–1906 is disordered; it reads ETMGKEGEGEGEGEEDEEEEEE. A compositionally biased stretch (acidic residues) spans 1893-1906; it reads GEGEGEEDEEEEEE.

It belongs to the protein kinase superfamily. CAMK Ser/Thr protein kinase family. All isoforms including Telokin bind calmodulin. It depends on Mg(2+) as a cofactor. Requires Ca(2+) as cofactor. Post-translationally, the C-terminus is deglutamylated, leading to the formation of Myosin light chain kinase, smooth muscle, deglutamylated form. The C-terminus is variable, with one to five C-terminal glutamyl residues being removed producing five forms differring in their number of C-terminal glutamyl residues. Acetylated. In terms of processing, phosphorylation of telokin by PKG has no significant effect on its myosin binding activity, but promotes translocation to the membrane. As to expression, isoform telokin is expressed in gizzard, heart, lung, intestine, and skeletal muscle although the levels of the expression in the latter were much less than that in the gizzard.

It localises to the cytoplasm. The protein resides in the cytosol. Its subcellular location is the membrane. The enzyme catalyses L-seryl-[myosin light chain] + ATP = O-phospho-L-seryl-[myosin light chain] + ADP + H(+). The catalysed reaction is L-threonyl-[myosin light chain] + ATP = O-phospho-L-threonyl-[myosin light chain] + ADP + H(+). Its activity is regulated as follows. Activated by phosphorylation on Tyr-478. Isoforms which lack this tyrosine residue are not regulated in this way. All catalytically active isoforms require binding to calcium and calmodulin for activation. Its function is as follows. Phosphorylates a specific serine in the N-terminus of a myosin light chain, which leads to the formation of calmodulin/MLCK signal transduction complexes which allow selective transduction of calcium signals. The polypeptide is Myosin light chain kinase, smooth muscle (Mylk) (Gallus gallus (Chicken)).